The sequence spans 709 residues: Polyribonucleotide nucleotidyltransferase (709 aa).

Mg(2+)-binding residues include Asp487 and Asp493. The 60-residue stretch at 554 to 613 (PRIHTMKISVEKIKDVIGKGGAVIRQLTEETGTTIEIEDDGTIKIAATDGDQAKEAIRRI) folds into the KH domain. The 69-residue stretch at 623–691 (GVIYTGKVAR…RQGRVRLSMK (69 aa)) folds into the S1 motif domain.

Belongs to the polyribonucleotide nucleotidyltransferase family. As to quaternary structure, component of the RNA degradosome, which is a multiprotein complex involved in RNA processing and mRNA degradation. Requires Mg(2+) as cofactor.

Its subcellular location is the cytoplasm. It catalyses the reaction RNA(n+1) + phosphate = RNA(n) + a ribonucleoside 5'-diphosphate. Involved in mRNA degradation. Catalyzes the phosphorolysis of single-stranded polyribonucleotides processively in the 3'- to 5'-direction. The chain is Polyribonucleotide nucleotidyltransferase from Vibrio cholerae serotype O1 (strain ATCC 39315 / El Tor Inaba N16961).